Consider the following 361-residue polypeptide: 45 kDa calcium-binding protein (361 aa).

Positions 1–35 (MVWLVAMTSRQRSLCGLAAHGLWFLGLVLLMDATA) are cleaved as a signal peptide. The N-linked (GlcNAc...) asparagine glycan is linked to N39. EF-hand domains follow at residues 97-132 (RSRR…KTAE) and 136-171 (EAVK…SKGH). The residue at position 98 (S98) is a Phosphoserine. Ca(2+)-binding residues include D110, N112, D114, R116, E121, D149, D151, D153, H155, and E160. Phosphothreonine is present on T192. 4 EF-hand domains span residues 196-231 (LGNL…HSRG), 232-267 (MLKF…TVEN), 277-312 (WVKD…MNEY), and 313-348 (NALN…FTGS). Ca(2+) is bound at residue D212. Residue T216 is modified to Phosphothreonine. 6 residues coordinate Ca(2+): E219, D245, D247, D249, Q251, and E256. Phosphothreonine is present on T264. Ca(2+)-binding residues include D290, N292, and D294. T298 carries the phosphothreonine modification. E301, D326, N328, N330, H332, and E337 together coordinate Ca(2+). A necessary for intracellular retention in Golgi apparatus lumen region spans residues 308–361 (PMNEYNALNEAKQMIAIADENQNHHLEPEEILKYSEFFTGSKLMDYARNVHEEF).

It belongs to the CREC family. In terms of assembly, a membrane-associated isoform interacts with STX3 and STXBP1. A membrane-associated isoform is expressed in acini of the pancreas (at protein level). Ubiquitous.

The protein localises to the golgi apparatus lumen. Functionally, a membrane-associated isoform may be involved in the exocytosis of zymogens by pancreatic acini. May regulate calcium-dependent activities in the endoplasmic reticulum lumen or post-ER compartment. The polypeptide is 45 kDa calcium-binding protein (Sdf4) (Rattus norvegicus (Rat)).